Consider the following 115-residue polypeptide: Colicin-Ib immunity protein (115 aa).

The next 3 helical transmembrane spans lie at 7 to 27 (VKYL…FYLG), 38 to 58 (FYAF…MRII), and 87 to 107 (IFEL…LIFI).

Its subcellular location is the cell membrane. In terms of biological role, this protein is able to protect a cell, which harbors the plasmid IncI1 ColIb-P9 encoding colicin Ib, against colicin Ib. The sequence is that of Colicin-Ib immunity protein from Escherichia coli.